The following is a 79-amino-acid chain: uncharacterized protein (79 aa).

This is an uncharacterized protein from Acidianus two-tailed virus (ATV).